The following is a 250-amino-acid chain: 7-carboxy-7-deazaguanine synthase (250 aa).

Substrate is bound by residues 15–17 (VQG) and R30. A Radical SAM core domain is found at 21-250 (LIGLRQVFIR…PQTHRFMGQL (230 aa)). [4Fe-4S] cluster-binding residues include C34, C38, and C41. Residue T43 coordinates Mg(2+). T96 provides a ligand contact to substrate. Residue G98 participates in S-adenosyl-L-methionine binding.

The protein belongs to the radical SAM superfamily. 7-carboxy-7-deazaguanine synthase family. As to quaternary structure, homodimer. Requires [4Fe-4S] cluster as cofactor. The cofactor is S-adenosyl-L-methionine. It depends on Mg(2+) as a cofactor.

It catalyses the reaction 6-carboxy-5,6,7,8-tetrahydropterin + H(+) = 7-carboxy-7-deazaguanine + NH4(+). It participates in purine metabolism; 7-cyano-7-deazaguanine biosynthesis. In terms of biological role, catalyzes the complex heterocyclic radical-mediated conversion of 6-carboxy-5,6,7,8-tetrahydropterin (CPH4) to 7-carboxy-7-deazaguanine (CDG), a step common to the biosynthetic pathways of all 7-deazapurine-containing compounds. The sequence is that of 7-carboxy-7-deazaguanine synthase from Geobacter sulfurreducens (strain ATCC 51573 / DSM 12127 / PCA).